A 1178-amino-acid polypeptide reads, in one-letter code: Ubiquitin carboxyl-terminal hydrolase cyk-3 (1178 aa).

EF-hand domains are found at residues 28–60, 175–210, and 211–246; these read EEYR…GAQI, FPDS…LCRG, and PLPG…LNVP. Ca(2+) is bound by residues aspartate 188, asparagine 190, aspartate 192, glutamine 194, glutamate 199, aspartate 224, aspartate 226, aspartate 228, and glutamate 235. A DUSP domain is found at 296 to 410; the sequence is ESRKMELQIV…VDSQFTRKYL (115 aa). The region spanning 570 to 1175 is the USP domain; the sequence is VGLVNYGNFC…GAYLLFYERK (606 aa). Cysteine 579 functions as the Nucleophile in the catalytic mechanism. The disordered stretch occupies residues 681–725; sequence SNKSLHPSPEESEGTDSNKLSDSSKKKEADKEEADEEKAERSWTE. Histidine 1134 (proton acceptor) is an active-site residue.

The protein belongs to the peptidase C19 family. As to expression, expressed in excretory cells, coelomocytes, head neurons, hypodermal cells, germ cells, oocytes, sperm and pharynx (at protein level).

It localises to the nucleus. It is found in the cytoplasm. Its subcellular location is the cytoskeleton. The protein resides in the microtubule organizing center. It catalyses the reaction Thiol-dependent hydrolysis of ester, thioester, amide, peptide and isopeptide bonds formed by the C-terminal Gly of ubiquitin (a 76-residue protein attached to proteins as an intracellular targeting signal).. Functionally, ubiquitin-protein hydrolase which cleaves ubiquitin from ubiquitinated proteins. Plays a role in embryo osmoregulation. Probably by regulating osmosis, controls actin redistribution in the 1-cell embryos and thus actin-dependent processes such as cytokinesis and P-granules segregation. During the first embryonic mitotic division, involved in the formation of a functional microtubule organizing center provided by the male pronucleus. Acts as a positive regulator of the mTORC1 signaling. The sequence is that of Ubiquitin carboxyl-terminal hydrolase cyk-3 from Caenorhabditis elegans.